A 136-amino-acid chain; its full sequence is Probable disulfide formation protein (136 aa).

Residues 7 to 26 (NNALYFAWLICSTGTVMSIY) traverse the membrane as a helical segment. A disulfide bond links C36 and C39. Helical transmembrane passes span 41 to 60 (YQRI…TYRE) and 67 to 84 (YALP…YQIC). A disulfide bridge connects residues C96 and C101. The helical transmembrane segment at 109 to 133 (GFITVPMASALAFCAISCLLILSGS) threads the bilayer.

The protein belongs to the DsbB family. BdbC subfamily.

It is found in the cell inner membrane. Functionally, required for disulfide bond formation in some proteins. This is Probable disulfide formation protein from Chlamydia caviae (strain ATCC VR-813 / DSM 19441 / 03DC25 / GPIC) (Chlamydophila caviae).